The following is a 278-amino-acid chain: Formamidopyrimidine-DNA glycosylase (278 aa).

Pro-2 serves as the catalytic Schiff-base intermediate with DNA. The active-site Proton donor is Glu-3. Lys-58 functions as the Proton donor; for beta-elimination activity in the catalytic mechanism. Positions 91, 109, and 158 each coordinate DNA. The FPG-type zinc finger occupies Lys-243–Lys-277. The active-site Proton donor; for delta-elimination activity is Arg-267.

The protein belongs to the FPG family. In terms of assembly, monomer. Requires Zn(2+) as cofactor.

The catalysed reaction is Hydrolysis of DNA containing ring-opened 7-methylguanine residues, releasing 2,6-diamino-4-hydroxy-5-(N-methyl)formamidopyrimidine.. The enzyme catalyses 2'-deoxyribonucleotide-(2'-deoxyribose 5'-phosphate)-2'-deoxyribonucleotide-DNA = a 3'-end 2'-deoxyribonucleotide-(2,3-dehydro-2,3-deoxyribose 5'-phosphate)-DNA + a 5'-end 5'-phospho-2'-deoxyribonucleoside-DNA + H(+). In terms of biological role, involved in base excision repair of DNA damaged by oxidation or by mutagenic agents. Acts as a DNA glycosylase that recognizes and removes damaged bases. Has a preference for oxidized purines, such as 7,8-dihydro-8-oxoguanine (8-oxoG). Has AP (apurinic/apyrimidinic) lyase activity and introduces nicks in the DNA strand. Cleaves the DNA backbone by beta-delta elimination to generate a single-strand break at the site of the removed base with both 3'- and 5'-phosphates. The protein is Formamidopyrimidine-DNA glycosylase of Polynucleobacter necessarius subsp. necessarius (strain STIR1).